The primary structure comprises 200 residues: MAKLYFNYSTMNAGKSTMLLQASYNYQERGMRTVQLIAAFDERAGRGVIGSRIGLEASAIPFEPDEDLFRLVMTLSGEGAPISCVFVDEAHFMTPLHVWQLARIVDRLGIPVMVYGLRTDFQGKLFPASQELLAIADEMREVRTICHCGRKATMVVRLDAQGKVLHEGAQIDVGGNEKYVSLCRRHWDDEMNGAWIAEPV.

ATP-binding positions include 9–16 (STMNAGKS) and 88–91 (DEAH). Glutamate 89 serves as the catalytic Proton acceptor. 4 residues coordinate Zn(2+): cysteine 146, cysteine 148, cysteine 183, and histidine 186.

The protein belongs to the thymidine kinase family. Homotetramer.

The protein resides in the cytoplasm. It catalyses the reaction thymidine + ATP = dTMP + ADP + H(+). This is Thymidine kinase from Rhizobium etli (strain ATCC 51251 / DSM 11541 / JCM 21823 / NBRC 15573 / CFN 42).